The chain runs to 584 residues: MDLLWMPLLLVAACVSAVHSSPEVNAGVSSIHITKPVHILEERSLLVLTPAGLTQMLNQTRFLMVLFHNPSSKQSRNLAEELGKAVEIMGKGKNGIGFGKVDITIEKELQQEFGITKAPELKLFFEGNRSEPISCKGVVESAALVVWLRRQISQKAFLFNSSEQVAEFVISRPLVIVGFFQDLEEEVAELFYDVIKDFPELTFGVITIGNVIGRFHVTLDSVLVFKKGKIVNRQKLINDSTNKQELNRVIKQHLTDFVIEYNTENKDLISELHIMSHMLLFVSKSSESYGIIIQHYKLASKEFQNKILFILVDADEPRNGRVFKYFRVTEVDIPSVQILNLSSDARYKMPSDDITYESLKKFGRSFLSKNATKHQSSEEIPKYWDQGLVKQLVGKNFNVVVFDKEKDVFVMFYAPWSKKCKMLFPLLEELGRKYQNHSTIIIAKIDVTANDIQLMYLDRYPFFRLFPSGSQQAVLYKGEHTLKGFSDFLESHIKTKIEDEDELLSVEQNEVIEEEVLAEEKEVPMMRKGLPEQQSPELENMTKYVSKLEEPAGKKKTSEEVVVVVAKPKGPPVQKKKPKVKEEL.

The first 20 residues, 1–20 (MDLLWMPLLLVAACVSAVHS), serve as a signal peptide directing secretion. N-linked (GlcNAc...) asparagine glycosylation is found at Asn58, Asn128, Asn160, and Asn340. The region spanning 388–451 (LVKQLVGKNF…IAKIDVTAND (64 aa)) is the Thioredoxin domain. N-linked (GlcNAc...) asparagine glycosylation occurs at Asn540. Positions 581–584 (KEEL) match the Prevents secretion from ER motif.

The protein belongs to the protein disulfide isomerase family. As to quaternary structure, homodimer. The homodimer is not disulfide-linked. Interacts with ERO1A and CLGN. N-glycosylated. As to expression, testis-specific.

It is found in the endoplasmic reticulum. Probable redox-inactive chaperone involved in spermatogenesis. This Homo sapiens (Human) protein is Protein disulfide-isomerase-like protein of the testis (PDILT).